Reading from the N-terminus, the 371-residue chain is Chitin deacetylase (371 aa).

The N-terminal stretch at M1–A20 is a signal peptide. A disordered region spans residues P73–T112. Composition is skewed to low complexity over residues P79–P89 and P102–T112. A disulfide bond links C164 and C358. Residue N167 is glycosylated (N-linked (GlcNAc...) asparagine). Residues G168 to V353 form the NodB homology domain. The active-site Proton acceptor is D175. D175 is a binding site for acetate. Residues D176, H228, and H232 each coordinate Co(2+). The N-linked (GlcNAc...) asparagine glycan is linked to N239. Y270 is a binding site for acetate. The active-site Proton donor is H327.

The protein belongs to the polysaccharide deacetylase family. It depends on Co(2+) as a cofactor.

It catalyses the reaction [(1-&gt;4)-N-acetyl-beta-D-glucosaminyl](n) + n H2O = chitosan + n acetate. Functionally, hydrolyzes the N-acetamido groups of N-acetyl-D-glucosamine residues in chitin to form chitosan and acetate. The polypeptide is Chitin deacetylase (Arthroderma benhamiae (strain ATCC MYA-4681 / CBS 112371) (Trichophyton mentagrophytes)).